Reading from the N-terminus, the 318-residue chain is tRNA dimethylallyltransferase (318 aa).

Gly9 to Thr16 is a binding site for ATP. Thr11 to Thr16 provides a ligand contact to substrate. Interaction with substrate tRNA stretches follow at residues Asp34–Gln37 and Gln158–Arg162.

It belongs to the IPP transferase family. As to quaternary structure, monomer. Requires Mg(2+) as cofactor.

The enzyme catalyses adenosine(37) in tRNA + dimethylallyl diphosphate = N(6)-dimethylallyladenosine(37) in tRNA + diphosphate. Functionally, catalyzes the transfer of a dimethylallyl group onto the adenine at position 37 in tRNAs that read codons beginning with uridine, leading to the formation of N6-(dimethylallyl)adenosine (i(6)A). The sequence is that of tRNA dimethylallyltransferase from Dichelobacter nodosus (strain VCS1703A).